The following is a 302-amino-acid chain: uncharacterized protein (302 aa).

2 disordered regions span residues 1–167 and 180–199; these read MPCR…QSSE and PSLCPSQTGTASTASPQRAS. Residues 39-54 show a composition bias toward basic and acidic residues; it reads EESHAPSRDPRDHQGS. 2 stretches are compositionally biased toward polar residues: residues 123-133 and 183-197; these read LSTSSCASVSR and CPSQTGTASTASPQR.

This is an uncharacterized protein from Homo sapiens (Human).